The sequence spans 107 residues: Sperm-specific class P protein 32 (107 aa).

The segment at Met-1 to His-20 is disordered. The MSP domain maps to Met-1–Asn-107.

Expressed at higher level in testis.

The protein is Sperm-specific class P protein 32 (ssp-32) of Caenorhabditis elegans.